The primary structure comprises 186 residues: MVKLAAKCILAGDPAVGKTALAQIFRSDGAHFQKSYTLTTGMDLVVKTVPVPDTGDSVELFIFDSAGKELFSEMLDKLWESPNVLCLVYDVTNEESFNNCSKWLEKARSQAPGISLPGVLVGNKTDLAGRRAVDSAEARAWALGQGLECFETSVKEMENFEAPFHCLAKQFHQLYREKVEVFRALA.

GTP-binding positions include 12–19 (GDPAVGKT), 64–68 (DSAGK), and 123–126 (NKTD).

This sequence belongs to the small GTPase superfamily. Rab family. Component of the IFT complex B, at least composed of IFT20, IFT25, IFT27, IFT52, IFT57, IFT74, IFT81, IFT88 and TRAF3IP1. Interacts with IFT25. Interacts with IFT70B. Interacts with RABL2/RABL2A; binding is equal in the presence of GTP or GDP. Interacts with ARL6; recognizes and binds with the GTP-free form of ARL6.

Its subcellular location is the cell projection. The protein resides in the cilium. The protein localises to the cytoplasm. It localises to the flagellum. Small GTPase-like component of the intraflagellar transport (IFT) complex B that promotes the exit of the BBSome complex from cilia via its interaction with ARL6. Not involved in entry of the BBSome complex into cilium. Prevents aggregation of GTP-free ARL6. Required for hedgehog signaling. Forms a subcomplex within the IFT complex B with IFT25. Its role in intraflagellar transport is mainly seen in tissues rich in ciliated cells such as kidney and testis. Essential for male fertility, spermiogenesis and sperm flagella formation. Plays a role in the early development of the kidney. May be involved in the regulation of ureteric bud initiation. The chain is Intraflagellar transport protein 27 homolog (IFT27) from Homo sapiens (Human).